The sequence spans 218 residues: Urease accessory protein UreG (218 aa).

22 to 29 (GPVGSGKT) is a binding site for GTP.

The protein belongs to the SIMIBI class G3E GTPase family. UreG subfamily. In terms of assembly, homodimer. UreD, UreF and UreG form a complex that acts as a GTP-hydrolysis-dependent molecular chaperone, activating the urease apoprotein by helping to assemble the nickel containing metallocenter of UreC. The UreE protein probably delivers the nickel.

The protein resides in the cytoplasm. Its function is as follows. Facilitates the functional incorporation of the urease nickel metallocenter. This process requires GTP hydrolysis, probably effectuated by UreG. This chain is Urease accessory protein UreG, found in Polaromonas sp. (strain JS666 / ATCC BAA-500).